A 434-amino-acid polypeptide reads, in one-letter code: Zinc carboxypeptidase (434 aa).

An N-terminal signal peptide occupies residues 1–33; it reads MSPKRRRLMAAALGACVALVLPLHAGSAQPSTA. The propeptide at 34–114 is activation peptide; the sequence is KTPERTVFEV…DFTDPQVGTQ (81 aa). The Peptidase M14 domain occupies 122–423; the sequence is GYHNFQETVT…SAVELFLSYS (302 aa). Zn(2+)-binding residues include His-183 and Glu-186. The segment at 270–295 is disordered; that stretch reads GSSSSGSSETTAARRRSPPRRSPHPH. The segment covering 282 to 293 has biased composition (basic residues); the sequence is ARRRSPPRRSPH. Zn(2+) is bound at residue His-315. Glu-388 serves as the catalytic Proton donor/acceptor.

Belongs to the peptidase M14 family. Zn(2+) is required as a cofactor.

It carries out the reaction Releases a C-terminal residue, which may be hydrophobic or positively charged.. In terms of biological role, carboxypeptidase that possesses the specificities of both mammalian Cpase A and B. Thus shows broad substrate specificity, being able to cleave Cbz-Gly-Leu, Cbz-Gly-Val, Cbz-Gly-Phe, Cbz-Gly-Lys and Bz-Gly-Arg in vitro. In Saccharothrix mutabilis subsp. capreolus (Streptomyces capreolus), this protein is Zinc carboxypeptidase.